A 246-amino-acid polypeptide reads, in one-letter code: Short chain dehydrogenase/reductase dmxR12 (246 aa).

Positions 15, 34, 125, and 164 each coordinate NADP(+). Lysine 164 serves as the catalytic Lowers pKa of active site Tyr.

It belongs to the short-chain dehydrogenases/reductases (SDR) family.

Its pathway is secondary metabolite biosynthesis. In terms of biological role, short chain dehydrogenase/reductase; part of the gene cluster that mediates the biosynthesis of the dimeric xanthones cryptosporioptides. The pathway begins with the synthesis of atrochrysone thioester by the polyketide synthase dmx-nrPKS. The atrochrysone carboxyl ACP thioesterase dmxR1 then breaks the thioester bond and releases the atrochrysone carboxylic acid from dmx-nrPKS. Atrochrysone carboxylic acid is decarboxylated by the decarboxylase dmxR15, and oxidized by the anthrone oxygenase dmxR16 to yield emodin. Emodin is then reduced to emodin hydroquinone by the oxidoreductase dmxR7. A-ring reduction by the short chain dehydrogenase dmxR18, dehydration by the scytalone dehydratase-like protein dmxR17 and probable spontaneous re-oxidation, results in overall deoxygenation to chrysophanol. Baeyer-Villiger oxidation by the Baeyer-Villiger monooxygenase (BVMO) dmxR6 then yields monodictylactone in equilibrium with monodictyphenone. In the case of the cryptosporioptides biosynthesis, monodictylactone is reduced at C-12 to an alcohol (by the short chain dehydrogenases dmxR12 or dmxR8) and hydroxylated at C-5 by dmxR9, yielding the electron-rich aromatic which could eliminate H(2)O to form the ortho-quinonemethide, followed by tautomerisation to paraquinone and complete the formal reduction to produce the 10-methylgroup. Conjugate addition of C-4a-OH to the resulting paraquinone by the monooxygenase dmxR10 then gives cyclohexadienone, which is then reduced at C-5 by the short chain dehydrogenase dmxR3 to give the dihydroxanthone. The 6,7-epoxide in the cryptosporioptides could be introduced by the cytochrome P450 monooxygenase dmxL3. The highly reducing PKS dmxL2 manufactures butyrate, which is further carboxylated by dmxL1 to form ethylmalonate. It is not yet clear whether the carboxylation occurs while the butyrate is attached to the ACP of dmxL2, but this unusual fungal metabolite could then be esterified to O-5 by the O-acetyltransferase dmxR13. Finally, dimerization performed by dmxR5 gives the observed dimers cryptosporioptides A, B and C as the final products of the pathway. This Cryptosporiopsis sp. (strain 8999) protein is Short chain dehydrogenase/reductase dmxR12.